The sequence spans 399 residues: Acetate kinase (399 aa).

Residue Asn-10 coordinates Mg(2+). Lys-17 contributes to the ATP binding site. Arg-91 serves as a coordination point for substrate. Asp-148 acts as the Proton donor/acceptor in catalysis. ATP-binding positions include 208–212, 283–285, and 331–335; these read HLGNG, DCR, and GIGEN. Glu-385 contacts Mg(2+).

It belongs to the acetokinase family. In terms of assembly, homodimer. The cofactor is Mg(2+). Mn(2+) is required as a cofactor.

The protein resides in the cytoplasm. The catalysed reaction is acetate + ATP = acetyl phosphate + ADP. Its pathway is metabolic intermediate biosynthesis; acetyl-CoA biosynthesis; acetyl-CoA from acetate: step 1/2. Functionally, catalyzes the formation of acetyl phosphate from acetate and ATP. Can also catalyze the reverse reaction. The chain is Acetate kinase from Shewanella amazonensis (strain ATCC BAA-1098 / SB2B).